The following is a 641-amino-acid chain: Chaperone protein DnaK (641 aa).

A Phosphothreonine; by autocatalysis modification is found at threonine 200. The segment covering 606-623 has biased composition (low complexity); that stretch reads AEQGGNADAASGNAQASK. Positions 606 to 628 are disordered; sequence AEQGGNADAASGNAQASKAADDV.

It belongs to the heat shock protein 70 family.

In terms of biological role, acts as a chaperone. The polypeptide is Chaperone protein DnaK (Xanthomonas axonopodis pv. citri (strain 306)).